The sequence spans 563 residues: Bifunctional dihydrofolate reductase-thymidylate synthase (563 aa).

The DHFR domain maps to 3–195 (KFNIIAAINN…ILLRFQEYSV (193 aa)). 117–124 (GGGVIYDL) contributes to the NADP(+) binding site. The thymidylate synthase stretch occupies residues 275–563 (YIELVKTIME…CPSISAEMIA (289 aa)). R292 is a dUMP binding site. C435 is an active-site residue. DUMP-binding positions include H436, 464-468 (QRSWD), N474, and 504-506 (HIY).

It in the N-terminal section; belongs to the dihydrofolate reductase family. In the C-terminal section; belongs to the thymidylate synthase family.

The enzyme catalyses (6S)-5,6,7,8-tetrahydrofolate + NADP(+) = 7,8-dihydrofolate + NADPH + H(+). It catalyses the reaction dUMP + (6R)-5,10-methylene-5,6,7,8-tetrahydrofolate = 7,8-dihydrofolate + dTMP. It participates in cofactor biosynthesis; tetrahydrofolate biosynthesis; 5,6,7,8-tetrahydrofolate from 7,8-dihydrofolate: step 1/1. Its function is as follows. Bifunctional enzyme. Involved in de novo dTMP biosynthesis. Key enzyme in folate metabolism. Catalyzes an essential reaction for de novo glycine and purine synthesis, DNA precursor synthesis, and for the conversion of dUMP to dTMP. The polypeptide is Bifunctional dihydrofolate reductase-thymidylate synthase (Acanthamoeba polyphaga mimivirus (APMV)).